The primary structure comprises 147 residues: Transthyretin (147 aa).

An N-terminal signal peptide occupies residues methionine 1–alanine 20. Residue cysteine 30 is modified to Sulfocysteine. Lysine 35 provides a ligand contact to L-thyroxine. Residue serine 72 is modified to Phosphoserine. Glutamate 74 contributes to the L-thyroxine binding site. Asparagine 118 carries an N-linked (GlcNAc...) asparagine glycan. Serine 137 contacts L-thyroxine.

It belongs to the transthyretin family. In terms of assembly, homotetramer. Dimer of dimers. In the homotetramer, subunits assemble around a central channel that can accommodate two ligand molecules. Interacts with RBP4. Sulfonation of the reactive cysteine Cys-30 enhances the stability of the native conformation of TTR, avoiding misassembly of the protein leading to amyloid formation.

The protein localises to the secreted. Its function is as follows. Thyroid hormone-binding protein. Probably transports thyroxine from the bloodstream to the brain. The chain is Transthyretin (TTR) from Macaca fascicularis (Crab-eating macaque).